The chain runs to 97 residues: Protein YcgL (97 aa).

One can recognise a YcgL domain in the interval 1-85 (MLCVIYRSSK…PPEDLLKQHL (85 aa)).

The sequence is that of Protein YcgL from Escherichia fergusonii (strain ATCC 35469 / DSM 13698 / CCUG 18766 / IAM 14443 / JCM 21226 / LMG 7866 / NBRC 102419 / NCTC 12128 / CDC 0568-73).